Consider the following 121-residue polypeptide: Large ribosomal subunit protein uL18 (121 aa).

This sequence belongs to the universal ribosomal protein uL18 family. Part of the 50S ribosomal subunit; part of the 5S rRNA/L5/L18/L25 subcomplex. Contacts the 5S and 23S rRNAs.

Functionally, this is one of the proteins that bind and probably mediate the attachment of the 5S RNA into the large ribosomal subunit, where it forms part of the central protuberance. The sequence is that of Large ribosomal subunit protein uL18 from Burkholderia multivorans (strain ATCC 17616 / 249).